The primary structure comprises 294 residues: Elongation factor Ts (294 aa).

Positions 81 to 84 are involved in Mg(2+) ion dislocation from EF-Tu; it reads TDFV.

This sequence belongs to the EF-Ts family.

The protein localises to the cytoplasm. Its function is as follows. Associates with the EF-Tu.GDP complex and induces the exchange of GDP to GTP. It remains bound to the aminoacyl-tRNA.EF-Tu.GTP complex up to the GTP hydrolysis stage on the ribosome. In Lawsonia intracellularis (strain PHE/MN1-00), this protein is Elongation factor Ts.